Consider the following 122-residue polypeptide: Large ribosomal subunit protein uL14 (122 aa).

It belongs to the universal ribosomal protein uL14 family. As to quaternary structure, part of the 50S ribosomal subunit. Forms a cluster with proteins L3 and L19. In the 70S ribosome, L14 and L19 interact and together make contacts with the 16S rRNA in bridges B5 and B8.

Functionally, binds to 23S rRNA. Forms part of two intersubunit bridges in the 70S ribosome. The protein is Large ribosomal subunit protein uL14 of Streptococcus pneumoniae (strain JJA).